A 431-amino-acid chain; its full sequence is Adenylosuccinate synthetase (431 aa).

GTP-binding positions include 12 to 18 (GDEGKGK) and 40 to 42 (GHT). Aspartate 13 serves as the catalytic Proton acceptor. Aspartate 13 and glycine 40 together coordinate Mg(2+). IMP contacts are provided by residues 13–16 (DEGK), 38–41 (NAGH), threonine 130, arginine 144, glutamine 225, threonine 240, and arginine 304. The active-site Proton donor is histidine 41. 300 to 306 (ATTGRPR) serves as a coordination point for substrate. GTP contacts are provided by residues arginine 306, 332–334 (KLD), and 414–416 (SVG).

The protein belongs to the adenylosuccinate synthetase family. In terms of assembly, homodimer. Requires Mg(2+) as cofactor.

It localises to the cytoplasm. The enzyme catalyses IMP + L-aspartate + GTP = N(6)-(1,2-dicarboxyethyl)-AMP + GDP + phosphate + 2 H(+). Its pathway is purine metabolism; AMP biosynthesis via de novo pathway; AMP from IMP: step 1/2. Its function is as follows. Plays an important role in the de novo pathway of purine nucleotide biosynthesis. Catalyzes the first committed step in the biosynthesis of AMP from IMP. In Geotalea daltonii (strain DSM 22248 / JCM 15807 / FRC-32) (Geobacter daltonii), this protein is Adenylosuccinate synthetase.